The following is a 349-amino-acid chain: UDP-N-acetylenolpyruvoylglucosamine reductase (349 aa).

Residues 26–197 (FDARARVAAR…VAVTFRLPKA (172 aa)) enclose the FAD-binding PCMH-type domain. Arg173 is a catalytic residue. Ser249 (proton donor) is an active-site residue. Glu345 is an active-site residue.

It belongs to the MurB family. The cofactor is FAD.

Its subcellular location is the cytoplasm. It carries out the reaction UDP-N-acetyl-alpha-D-muramate + NADP(+) = UDP-N-acetyl-3-O-(1-carboxyvinyl)-alpha-D-glucosamine + NADPH + H(+). It functions in the pathway cell wall biogenesis; peptidoglycan biosynthesis. Cell wall formation. This chain is UDP-N-acetylenolpyruvoylglucosamine reductase, found in Burkholderia pseudomallei (strain 1710b).